The primary structure comprises 182 residues: Large ribosomal subunit protein uL22 (182 aa).

The disordered stretch occupies residues 159 to 182; sequence AAAKPKATAKKATGEKSKAKTKAN.

The protein belongs to the universal ribosomal protein uL22 family. In terms of assembly, part of the 50S ribosomal subunit.

Its function is as follows. This protein binds specifically to 23S rRNA; its binding is stimulated by other ribosomal proteins, e.g. L4, L17, and L20. It is important during the early stages of 50S assembly. It makes multiple contacts with different domains of the 23S rRNA in the assembled 50S subunit and ribosome. In terms of biological role, the globular domain of the protein is located near the polypeptide exit tunnel on the outside of the subunit, while an extended beta-hairpin is found that lines the wall of the exit tunnel in the center of the 70S ribosome. This chain is Large ribosomal subunit protein uL22, found in Cytophaga hutchinsonii (strain ATCC 33406 / DSM 1761 / CIP 103989 / NBRC 15051 / NCIMB 9469 / D465).